The primary structure comprises 703 residues: Lethal(3)malignant brain tumor-like protein 2 (703 aa).

The disordered stretch occupies residues 1 to 85 (MEKPRGTEEA…NNRSLDGSGS (85 aa)). Ser13 carries the phosphoserine modification. The segment covering 15–25 (PMEEEEEDDLD) has biased composition (acidic residues). The segment covering 35–49 (SYNSSAGSESSSYLE) has biased composition (low complexity). Residues 50–60 (ESSEAENEDRE) show a composition bias toward acidic residues. Residue Ser67 is modified to Phosphoserine. The span at 73 to 82 (SSANNRSLDG) shows a compositional bias: polar residues. The FCS-type zinc finger occupies 81–116 (DGSGSEPAVCEMCGIVGTREAFFSKTKRFCSVSCSR). Residues Cys90, Cys93, Cys110, and Cys114 each coordinate Zn(2+). MBT repeat units follow at residues 179–283 (FDWG…LVPP), 291–391 (TDWK…IKMS), 397–500 (MSHH…LTPP), and 508–604 (FAWE…LQPP). The residue at position 338 (Ser338) is a Phosphoserine. Lys405 participates in a covalent cross-link: Glycyl lysine isopeptide (Lys-Gly) (interchain with G-Cter in SUMO2). A disordered region spans residues 604-649 (PVSAEPNTPQKGKDTTKKKKKQFGKKRKRIPSAKTRPLRQGSKKPL). Residues 619–634 (TKKKKKQFGKKRKRIP) show a composition bias toward basic residues. Residues Lys647 and Lys673 each participate in a glycyl lysine isopeptide (Lys-Gly) (interchain with G-Cter in SUMO2) cross-link. The tract at residues 675–703 (EHQDISSLDRSPSPQLPLPIESIKQERNN) is disordered. Phosphoserine is present on residues Ser681, Ser685, and Ser687. Residue Lys698 forms a Glycyl lysine isopeptide (Lys-Gly) (interchain with G-Cter in SUMO1); alternate linkage. Lys698 is covalently cross-linked (Glycyl lysine isopeptide (Lys-Gly) (interchain with G-Cter in SUMO2); alternate).

As to quaternary structure, part of the E2F6.com-1 complex in G0 phase composed of E2F6, MGA, MAX, TFDP1, CBX3, BAT8, EUHMTASE1, RING1, RNF2, MBLR, BAT8 and YAF2. Phosphorylated. Ubiquitous.

It is found in the nucleus. In terms of biological role, putative Polycomb group (PcG) protein. PcG proteins maintain the transcriptionally repressive state of genes, probably via a modification of chromatin, rendering it heritably changed in its expressibility. Its association with a chromatin-remodeling complex suggests that it may contribute to prevent expression of genes that trigger the cell into mitosis. Binds to monomethylated and dimethylated 'Lys-20' on histone H4. Binds histone H3 peptides that are monomethylated or dimethylated on 'Lys-4', 'Lys-9' or 'Lys-27'. The polypeptide is Lethal(3)malignant brain tumor-like protein 2 (L3mbtl2) (Mus musculus (Mouse)).